The chain runs to 459 residues: Glutamate--tRNA ligase 2 (459 aa).

The short motif at 8-18 (PSPTGYLHIGG) is the 'HIGH' region element. The short motif at 237-241 (KLSKR) is the 'KMSKS' region element. Lys240 provides a ligand contact to ATP.

It belongs to the class-I aminoacyl-tRNA synthetase family. Glutamate--tRNA ligase type 1 subfamily. In terms of assembly, monomer.

The protein localises to the cytoplasm. It carries out the reaction tRNA(Glu) + L-glutamate + ATP = L-glutamyl-tRNA(Glu) + AMP + diphosphate. Its function is as follows. Catalyzes the attachment of glutamate to tRNA(Glu) in a two-step reaction: glutamate is first activated by ATP to form Glu-AMP and then transferred to the acceptor end of tRNA(Glu). This Campylobacter concisus (strain 13826) protein is Glutamate--tRNA ligase 2.